Reading from the N-terminus, the 989-residue chain is Phosphoenolpyruvate carboxylase (989 aa).

Residues H175 and K630 contribute to the active site.

This sequence belongs to the PEPCase type 1 family. Mg(2+) is required as a cofactor.

The catalysed reaction is oxaloacetate + phosphate = phosphoenolpyruvate + hydrogencarbonate. Its function is as follows. Forms oxaloacetate, a four-carbon dicarboxylic acid source for the tricarboxylic acid cycle. This is Phosphoenolpyruvate carboxylase from Prochlorococcus marinus (strain MIT 9515).